The sequence spans 462 residues: Beta-glucosidase 1A (462 aa).

Residues Gln20, His123, and Asn169 each contribute to the substrate site. The active-site Proton donor is the Glu170. Residue Tyr301 participates in substrate binding. Glu365 (nucleophile) is an active-site residue. Residues Trp415 and 422-423 contribute to the substrate site; that span reads EW.

This sequence belongs to the glycosyl hydrolase 1 family.

It carries out the reaction Hydrolysis of terminal, non-reducing beta-D-glucosyl residues with release of beta-D-glucose.. Functionally, plays an important role in cellulose degradation. Shows hydrolytic activity against several glycosidic compounds. The protein is Beta-glucosidase 1A of Phanerodontia chrysosporium (White-rot fungus).